Reading from the N-terminus, the 430-residue chain is MATSAGKLRTLYSAHSSLSSLPPSARPTLQLATLRSYATTTPHDSPIGNTSNTPPTVKRPATAFKDKLNAGPAFSDFVSGKKDEPLDPAEAYALKTALVGPPGRKKEITRLPPWLKTAIPDSSNYKRIKNDLRGLNLHTVCEEARCPNIADCWGGSSKSAATATIMLMGDTCTRGCRFCSVKTSNKPPPLDPHEPDNTAEALSRWGLGYVVLTSVDRDDLADGGARHFAETVMKIKQKAPNILVECLTGDYAGDLDMVALVANSGLDVFAHNVETVEALTPFVRDRRASFQQSLRVLKAAKAAKPELITKTSLMLGLGETEAQLWDALRALRAINVDVVTFGQYMRPTKRHMAVHEYVRPDVFDLWKERALEMGFLYCASGPLVRSSYKAGEAFIENVLKKRRGENAGSVNEKVTTSENVKKLVAGEAMM.

A mitochondrion-targeting transit peptide spans 1–37 (MATSAGKLRTLYSAHSSLSSLPPSARPTLQLATLRSY). Positions 39–55 (TTTPHDSPIGNTSNTPP) are enriched in polar residues. Positions 39-58 (TTTPHDSPIGNTSNTPPTVK) are disordered. 7 residues coordinate [4Fe-4S] cluster: Cys141, Cys146, Cys152, Cys172, Cys176, Cys179, and Ser387. The Radical SAM core domain occupies 155 to 376 (GSSKSAATAT…KERALEMGFL (222 aa)).

It belongs to the radical SAM superfamily. Lipoyl synthase family. The cofactor is [4Fe-4S] cluster.

The protein localises to the mitochondrion. It catalyses the reaction [[Fe-S] cluster scaffold protein carrying a second [4Fe-4S](2+) cluster] + N(6)-octanoyl-L-lysyl-[protein] + 2 oxidized [2Fe-2S]-[ferredoxin] + 2 S-adenosyl-L-methionine + 4 H(+) = [[Fe-S] cluster scaffold protein] + N(6)-[(R)-dihydrolipoyl]-L-lysyl-[protein] + 4 Fe(3+) + 2 hydrogen sulfide + 2 5'-deoxyadenosine + 2 L-methionine + 2 reduced [2Fe-2S]-[ferredoxin]. Its pathway is protein modification; protein lipoylation via endogenous pathway; protein N(6)-(lipoyl)lysine from octanoyl-[acyl-carrier-protein]: step 2/2. In terms of biological role, catalyzes the radical-mediated insertion of two sulfur atoms into the C-6 and C-8 positions of the octanoyl moiety bound to the lipoyl domains of lipoate-dependent enzymes, thereby converting the octanoylated domains into lipoylated derivatives. This is Lipoyl synthase, mitochondrial from Ajellomyces capsulatus (strain G186AR / H82 / ATCC MYA-2454 / RMSCC 2432) (Darling's disease fungus).